The following is a 270-amino-acid chain: Very long chain fatty acid elongase 3 (270 aa).

An N-linked (GlcNAc...) asparagine glycan is attached at asparagine 6. Helical transmembrane passes span 29 to 49 and 63 to 83; these read FFEEYWATSFPIALIYLVLIA and LQGPLILWSFCLAIFSILGAV. Residue asparagine 110 is glycosylated (N-linked (GlcNAc...) asparagine). 5 helical membrane passes run 115 to 135, 140 to 160, 164 to 184, 198 to 218, and 235 to 255; these read FWSWVFLLSKVIELGDTAFII, PLIFIHWYHHSTVLVYTSFGY, VPAGGWFVTMNFGVHAIMYTY, LPMLITSLQILQMFVGAIVSI, and HLFWSFILYMTYFILFAHFFC. Positions 266–270 match the Di-lysine motif motif; that stretch reads KTKSQ.

The protein belongs to the ELO family. ELOVL3 subfamily. Interacts with TECR. In terms of processing, N-Glycosylated. As to expression, testis.

Its subcellular location is the endoplasmic reticulum membrane. The catalysed reaction is a very-long-chain acyl-CoA + malonyl-CoA + H(+) = a very-long-chain 3-oxoacyl-CoA + CO2 + CoA. It catalyses the reaction eicosanoyl-CoA + malonyl-CoA + H(+) = 3-oxodocosanoyl-CoA + CO2 + CoA. It carries out the reaction hexadecanoyl-CoA + malonyl-CoA + H(+) = 3-oxooctadecanoyl-CoA + CO2 + CoA. The enzyme catalyses octadecanoyl-CoA + malonyl-CoA + H(+) = 3-oxoeicosanoyl-CoA + CO2 + CoA. The catalysed reaction is (9Z)-octadecenoyl-CoA + malonyl-CoA + H(+) = 3-oxo-(11Z)-eicosenoyl-CoA + CO2 + CoA. It catalyses the reaction (9Z,12Z)-octadecadienoyl-CoA + malonyl-CoA + H(+) = (11Z,14Z)-3-oxoicosa-11,14-dienoyl-CoA + CO2 + CoA. It carries out the reaction (9Z,12Z,15Z)-octadecatrienoyl-CoA + malonyl-CoA + H(+) = (11Z,14Z,17Z)-3-oxoeicosatrienoyl-CoA + CO2 + CoA. The enzyme catalyses docosanoyl-CoA + malonyl-CoA + H(+) = 3-oxotetracosanoyl-CoA + CO2 + CoA. The catalysed reaction is tetradecanoyl-CoA + malonyl-CoA + H(+) = 3-oxohexadecanoyl-CoA + CO2 + CoA. It functions in the pathway lipid metabolism; polyunsaturated fatty acid biosynthesis. Its function is as follows. Catalyzes the first and rate-limiting reaction of the four reactions that constitute the long-chain fatty acids elongation cycle. This endoplasmic reticulum-bound enzymatic process allows the addition of 2 carbons to the chain of long- and very long-chain fatty acids (VLCFAs) per cycle. Condensing enzyme that exhibits activity toward saturated and unsaturated acyl-CoA substrates with higher activity toward C18 acyl-CoAs, especially C18:0 acyl-CoAs. May participate in the production of saturated and monounsaturated VLCFAs of different chain lengths that are involved in multiple biological processes as precursors of membrane lipids and lipid mediators. This chain is Very long chain fatty acid elongase 3, found in Homo sapiens (Human).